Reading from the N-terminus, the 130-residue chain is Small ribosomal subunit protein uS11c (130 aa).

This sequence belongs to the universal ribosomal protein uS11 family. In terms of assembly, part of the 30S ribosomal subunit.

The protein localises to the plastid. It is found in the chloroplast. In Chlorokybus atmophyticus (Soil alga), this protein is Small ribosomal subunit protein uS11c.